A 306-amino-acid chain; its full sequence is Protein-methionine-sulfoxide reductase catalytic subunit MsrP (306 aa).

A signal peptide (tat-type signal) is located at residues 1–44 (MLIRHAPDLTDNDVTGHGLYLRRRDFIGGAAGLGLMAAAGSASA). Mo-molybdopterin-binding positions include Asn69, 72-73 (YE), Cys127, Thr162, Asn210, Arg215, and 226-228 (GIK).

The protein belongs to the MsrP family. Heterodimer of a catalytic subunit (MsrP) and a heme-binding subunit (MsrQ). Requires Mo-molybdopterin as cofactor. In terms of processing, predicted to be exported by the Tat system. The position of the signal peptide cleavage has not been experimentally proven.

Its subcellular location is the periplasm. The enzyme catalyses L-methionyl-[protein] + a quinone + H2O = L-methionyl-(S)-S-oxide-[protein] + a quinol. The catalysed reaction is L-methionyl-[protein] + a quinone + H2O = L-methionyl-(R)-S-oxide-[protein] + a quinol. Its function is as follows. Part of the MsrPQ system that repairs oxidized periplasmic proteins containing methionine sulfoxide residues (Met-O), using respiratory chain electrons. Thus protects these proteins from oxidative-stress damage caused by reactive species of oxygen and chlorine generated by the host defense mechanisms. MsrPQ is essential for the maintenance of envelope integrity under bleach stress, rescuing a wide series of structurally unrelated periplasmic proteins from methionine oxidation. The catalytic subunit MsrP is non-stereospecific, being able to reduce both (R-) and (S-) diastereoisomers of methionine sulfoxide. This chain is Protein-methionine-sulfoxide reductase catalytic subunit MsrP, found in Caulobacter sp. (strain K31).